The chain runs to 388 residues: Alanine racemase 3 (388 aa).

Lys41 functions as the Proton acceptor; specific for D-alanine in the catalytic mechanism. Lys41 is subject to N6-(pyridoxal phosphate)lysine. Residue Arg135 coordinates substrate. Residue Tyr256 is the Proton acceptor; specific for L-alanine of the active site. Met304 contributes to the substrate binding site.

The protein belongs to the alanine racemase family. The cofactor is pyridoxal 5'-phosphate.

The enzyme catalyses L-alanine = D-alanine. Its pathway is amino-acid biosynthesis; D-alanine biosynthesis; D-alanine from L-alanine: step 1/1. In terms of biological role, catalyzes the interconversion of L-alanine and D-alanine. May also act on other amino acids. The chain is Alanine racemase 3 (alr3) from Mesorhizobium japonicum (strain LMG 29417 / CECT 9101 / MAFF 303099) (Mesorhizobium loti (strain MAFF 303099)).